The sequence spans 503 residues: Lysine--tRNA ligase (503 aa).

Mg(2+) is bound by residues Glu-414 and Glu-421.

Belongs to the class-II aminoacyl-tRNA synthetase family. In terms of assembly, homodimer. Mg(2+) serves as cofactor.

Its subcellular location is the cytoplasm. It catalyses the reaction tRNA(Lys) + L-lysine + ATP = L-lysyl-tRNA(Lys) + AMP + diphosphate. In Neisseria gonorrhoeae (strain NCCP11945), this protein is Lysine--tRNA ligase.